The chain runs to 88 residues: Small ribosomal subunit protein uS17 (88 aa).

Belongs to the universal ribosomal protein uS17 family. As to quaternary structure, part of the 30S ribosomal subunit.

Its function is as follows. One of the primary rRNA binding proteins, it binds specifically to the 5'-end of 16S ribosomal RNA. This is Small ribosomal subunit protein uS17 from Lactobacillus delbrueckii subsp. bulgaricus (strain ATCC 11842 / DSM 20081 / BCRC 10696 / JCM 1002 / NBRC 13953 / NCIMB 11778 / NCTC 12712 / WDCM 00102 / Lb 14).